The following is a 302-amino-acid chain: Sulfate adenylyltransferase subunit 2 (302 aa).

It belongs to the PAPS reductase family. CysD subfamily. As to quaternary structure, heterodimer composed of CysD, the smaller subunit, and CysN.

It catalyses the reaction sulfate + ATP + H(+) = adenosine 5'-phosphosulfate + diphosphate. Its pathway is sulfur metabolism; hydrogen sulfide biosynthesis; sulfite from sulfate: step 1/3. Its function is as follows. With CysN forms the ATP sulfurylase (ATPS) that catalyzes the adenylation of sulfate producing adenosine 5'-phosphosulfate (APS) and diphosphate, the first enzymatic step in sulfur assimilation pathway. APS synthesis involves the formation of a high-energy phosphoric-sulfuric acid anhydride bond driven by GTP hydrolysis by CysN coupled to ATP hydrolysis by CysD. The sequence is that of Sulfate adenylyltransferase subunit 2 from Shigella boydii serotype 4 (strain Sb227).